Consider the following 497-residue polypeptide: Probable cytosol aminopeptidase (497 aa).

Mn(2+) contacts are provided by Lys-263 and Asp-268. Residue Lys-275 is part of the active site. Mn(2+)-binding residues include Asp-286, Asp-345, and Glu-347. Arg-349 is a catalytic residue.

Belongs to the peptidase M17 family. Requires Mn(2+) as cofactor.

Its subcellular location is the cytoplasm. It catalyses the reaction Release of an N-terminal amino acid, Xaa-|-Yaa-, in which Xaa is preferably Leu, but may be other amino acids including Pro although not Arg or Lys, and Yaa may be Pro. Amino acid amides and methyl esters are also readily hydrolyzed, but rates on arylamides are exceedingly low.. The catalysed reaction is Release of an N-terminal amino acid, preferentially leucine, but not glutamic or aspartic acids.. Functionally, presumably involved in the processing and regular turnover of intracellular proteins. Catalyzes the removal of unsubstituted N-terminal amino acids from various peptides. This chain is Probable cytosol aminopeptidase, found in Allorhizobium ampelinum (strain ATCC BAA-846 / DSM 112012 / S4) (Agrobacterium vitis (strain S4)).